Consider the following 235-residue polypeptide: Ribonuclease 3 (235 aa).

One can recognise an RNase III domain in the interval 7–135; that stretch reads FAALEARLGH…VVAAVYLDGG (129 aa). Glu48 is a Mg(2+) binding site. Residue Asp52 is part of the active site. Residues Asp121 and Glu124 each coordinate Mg(2+). The active site involves Glu124. A DRBM domain is found at 160–229; that stretch reads DPKTVLQEWA…ASAFLAREGV (70 aa).

It belongs to the ribonuclease III family. As to quaternary structure, homodimer. It depends on Mg(2+) as a cofactor.

The protein resides in the cytoplasm. It catalyses the reaction Endonucleolytic cleavage to 5'-phosphomonoester.. Functionally, digests double-stranded RNA. Involved in the processing of primary rRNA transcript to yield the immediate precursors to the large and small rRNAs (23S and 16S). Processes some mRNAs, and tRNAs when they are encoded in the rRNA operon. Processes pre-crRNA and tracrRNA of type II CRISPR loci if present in the organism. This is Ribonuclease 3 from Azorhizobium caulinodans (strain ATCC 43989 / DSM 5975 / JCM 20966 / LMG 6465 / NBRC 14845 / NCIMB 13405 / ORS 571).